The chain runs to 35 residues: Photosystem II reaction center protein M (35 aa).

A helical membrane pass occupies residues 5–25 (ILAVIATALFIIIPTSFLLIL).

It belongs to the PsbM family. As to quaternary structure, PSII is composed of 1 copy each of membrane proteins PsbA, PsbB, PsbC, PsbD, PsbE, PsbF, PsbH, PsbI, PsbJ, PsbK, PsbL, PsbM, PsbT, PsbX, PsbY, PsbZ, Psb30/Ycf12, at least 3 peripheral proteins of the oxygen-evolving complex and a large number of cofactors. It forms dimeric complexes.

The protein resides in the plastid. It localises to the chloroplast thylakoid membrane. One of the components of the core complex of photosystem II (PSII). PSII is a light-driven water:plastoquinone oxidoreductase that uses light energy to abstract electrons from H(2)O, generating O(2) and a proton gradient subsequently used for ATP formation. It consists of a core antenna complex that captures photons, and an electron transfer chain that converts photonic excitation into a charge separation. This subunit is found at the monomer-monomer interface. This is Photosystem II reaction center protein M from Staurastrum punctulatum (Green alga).